Reading from the N-terminus, the 516-residue chain is GMP synthase [glutamine-hydrolyzing] (516 aa).

A Glutamine amidotransferase type-1 domain is found at 8-198 (KILILDFGSQ…VVNICGCDTL (191 aa)). Cys-84 (nucleophile) is an active-site residue. Active-site residues include His-172 and Glu-174. A GMPS ATP-PPase domain is found at 199 to 391 (WNIENIIEND…LGLPYNMLYR (193 aa)). 226-232 (SGGVDSS) lines the ATP pocket.

In terms of assembly, homodimer.

The catalysed reaction is XMP + L-glutamine + ATP + H2O = GMP + L-glutamate + AMP + diphosphate + 2 H(+). Its pathway is purine metabolism; GMP biosynthesis; GMP from XMP (L-Gln route): step 1/1. Functionally, catalyzes the synthesis of GMP from XMP. This Francisella tularensis subsp. holarctica (strain FTNF002-00 / FTA) protein is GMP synthase [glutamine-hydrolyzing].